Reading from the N-terminus, the 211-residue chain is RING finger protein narya (211 aa).

Residues 6–47 (CNKCFRHRKTDPAVPFHLTQCRHVICGPCLGQSSLEKNCPLC) form an RING-type zinc finger. Positions 149 to 211 (RRRHSAGERF…FGSDTKGFRL (63 aa)) are disordered. Residues 153 to 165 (SAGERFHTPEFKE) show a composition bias toward basic and acidic residues. Residues 172–184 (STSDKSPSDMPSD) show a composition bias toward low complexity.

In terms of assembly, may interact with itself, with nenya and vilya through its RING-type zinc finger. In terms of tissue distribution, expressed in nurse cell and pro-oocytes (at protein level).

It is found in the chromosome. In terms of biological role, required for the formation of DNA double-strand breaks (DSBs) together with nenya and vilya during the meiotic recombination process. Plays a role in DSBs processing into crossovers. Plays a redundant role with nenya in chromosome segregation during female meiosis. This is RING finger protein narya from Drosophila melanogaster (Fruit fly).